We begin with the raw amino-acid sequence, 399 residues long: Elongation factor Tu (399 aa).

A tr-type G domain is found at 10–207 (KPHVNVGTIG…ALDSYIPEPV (198 aa)). Positions 19–26 (GHIDHGKT) are G1. Residue 19 to 26 (GHIDHGKT) participates in GTP binding. Thr-26 lines the Mg(2+) pocket. Residues 60 to 64 (GITIN) are G2. The tract at residues 81–84 (DCPG) is G3. Residues 81 to 85 (DCPGH) and 136 to 139 (NKVD) each bind GTP. The tract at residues 136–139 (NKVD) is G4. Positions 174–176 (SAL) are G5.

Belongs to the TRAFAC class translation factor GTPase superfamily. Classic translation factor GTPase family. EF-Tu/EF-1A subfamily. As to quaternary structure, monomer.

The protein localises to the cytoplasm. It carries out the reaction GTP + H2O = GDP + phosphate + H(+). Functionally, GTP hydrolase that promotes the GTP-dependent binding of aminoacyl-tRNA to the A-site of ribosomes during protein biosynthesis. The protein is Elongation factor Tu of Pseudothermotoga lettingae (strain ATCC BAA-301 / DSM 14385 / NBRC 107922 / TMO) (Thermotoga lettingae).